A 167-amino-acid polypeptide reads, in one-letter code: Ubiquitin-fold modifier-conjugating enzyme 1 (167 aa).

Cysteine 116 serves as the catalytic Glycyl thioester intermediate.

The protein belongs to the ubiquitin-conjugating enzyme family. UFC1 subfamily. As to quaternary structure, interacts with UBA5 (via C-terminus). Interacts with UFL1. Interacts with UFM1.

In terms of biological role, E2-like enzyme which specifically catalyzes the second step in ufmylation. Accepts the ubiquitin-like modifier UFM1 from the E1 enzyme UBA5 and forms an intermediate with UFM1 via a thioester linkage. Ufmylation is involved in various processes, such as ribosome recycling, response to DNA damage, interferon response or reticulophagy (also called ER-phagy). The protein is Ubiquitin-fold modifier-conjugating enzyme 1 of Osmerus mordax (Rainbow smelt).